Reading from the N-terminus, the 85-residue chain is uncharacterized protein (85 aa).

The next 2 membrane-spanning stretches (helical) occupy residues 16–34 (WALS…CAYL) and 50–71 (LSCI…KIIF).

This sequence to E.coli YhdT.

The protein resides in the cell membrane. This is an uncharacterized protein from Haemophilus influenzae (strain ATCC 51907 / DSM 11121 / KW20 / Rd).